The chain runs to 92 residues: Long neurotoxin 1 (92 aa).

An N-terminal signal peptide occupies residues 1–21; that stretch reads MKILLLTLVVVTIVCLDLAYT. Cystine bridges form between Cys-24–Cys-41, Cys-34–Cys-62, Cys-47–Cys-51, Cys-66–Cys-77, and Cys-78–Cys-83.

It belongs to the three-finger toxin family. Long-chain subfamily. Type II alpha-neurotoxin sub-subfamily. Expressed by the venom gland.

It is found in the secreted. Functionally, binds with high affinity to muscular (alpha-1/CHRNA1) and neuronal (alpha-7/CHRNA7) nicotinic acetylcholine receptor (nAChR) and inhibits acetylcholine from binding to the receptor, thereby impairing neuromuscular and neuronal transmission. The sequence is that of Long neurotoxin 1 from Hydrophis hardwickii (Hardwick's spine-bellied seasnake).